Reading from the N-terminus, the 179-residue chain is Large ribosomal subunit protein uL6 (179 aa).

This sequence belongs to the universal ribosomal protein uL6 family. In terms of assembly, part of the 50S ribosomal subunit.

In terms of biological role, this protein binds to the 23S rRNA, and is important in its secondary structure. It is located near the subunit interface in the base of the L7/L12 stalk, and near the tRNA binding site of the peptidyltransferase center. This Mycobacteroides abscessus (strain ATCC 19977 / DSM 44196 / CCUG 20993 / CIP 104536 / JCM 13569 / NCTC 13031 / TMC 1543 / L948) (Mycobacterium abscessus) protein is Large ribosomal subunit protein uL6.